The sequence spans 726 residues: Catalase-peroxidase (726 aa).

The disordered stretch occupies residues 1 to 33 (MSTTDDTHNTLSTGKCPFHQGGHDRSAGAGTAS). A cross-link (tryptophyl-tyrosyl-methioninium (Trp-Tyr) (with M-252)) is located at residues 105–226 (WHGAGTYRSI…LGATEMGLIY (122 aa)). Histidine 106 acts as the Proton acceptor in catalysis. The tryptophyl-tyrosyl-methioninium (Tyr-Met) (with W-105) cross-link spans 226–252 (YVNPEGPDHSGEPLSAAAAIRATFGNM). Histidine 267 contributes to the heme b binding site.

Belongs to the peroxidase family. Peroxidase/catalase subfamily. Homodimer or homotetramer. Heme b serves as cofactor. In terms of processing, formation of the three residue Trp-Tyr-Met cross-link is important for the catalase, but not the peroxidase activity of the enzyme.

It carries out the reaction H2O2 + AH2 = A + 2 H2O. It catalyses the reaction 2 H2O2 = O2 + 2 H2O. In terms of biological role, bifunctional enzyme with both catalase and broad-spectrum peroxidase activity. The chain is Catalase-peroxidase from Salmonella paratyphi B (strain ATCC BAA-1250 / SPB7).